A 311-amino-acid polypeptide reads, in one-letter code: Pyrimidine-specific ribonucleoside hydrolase RihA (311 aa).

H240 is an active-site residue.

Belongs to the IUNH family. RihA subfamily.

In terms of biological role, hydrolyzes cytidine or uridine to ribose and cytosine or uracil, respectively. This Salmonella paratyphi A (strain ATCC 9150 / SARB42) protein is Pyrimidine-specific ribonucleoside hydrolase RihA.